The following is a 106-amino-acid chain: MNSILGLIDTVTNTVGKGQQIELDKAALGQQRELALQRMSLDRQALNNQVEQFNKLLEQRVHGPIQSVRLARAAGFRVDPYSYTNQNFYDDQLNAIRLSYRNLFKN.

This sequence belongs to the vesivirus VP2 protein family. Homooligomer. The portal-like structure consists in 12 copies of VP2. Interacts with capsid protein VP1.

The protein resides in the virion. It localises to the host cytoplasm. Functionally, minor structural protein that forms a portal-like structure at a unique three-fold axis of symmetry, following binding to the host receptor. The virion attaches to feline junctional adhesion molecule A (F11R). Once attached, the virion is endocytosed. Acidification of the endosome induces conformational change of capsid protein thereby injecting virus genomic RNA into host cytoplasm. The channel formed by VP2 may allow the delivery of the viral genome through the host endosomal membrane. This is Minor capsid protein VP2 from Feline calicivirus (strain Japanese F4) (FCV).